Consider the following 303-residue polypeptide: ADP-ribosyl cyclase/cyclic ADP-ribose hydrolase 1 (303 aa).

The Cytoplasmic portion of the chain corresponds to 1 to 21 (MANYEFSQVSEDRPGCRLTRK). Residues 22-44 (AQIGLGVGLLLLVALVVVVVIVL) traverse the membrane as a helical; Signal-anchor for type II membrane protein segment. The Extracellular segment spans residues 45–303 (WPRSPLVWKG…PEHPSCRLNV (259 aa)). 3 disulfides stabilise this stretch: cysteine 69-cysteine 85, cysteine 102-cysteine 183, and cysteine 163-cysteine 176. N-linked (GlcNAc...) asparagine glycosylation occurs at asparagine 103. Residue cysteine 122 is part of the active site. A glycan (N-linked (GlcNAc...) asparagine) is linked at asparagine 123. Cysteine 204 is an active-site residue. N-linked (GlcNAc...) asparagine glycosylation is found at asparagine 212 and asparagine 222. Disulfide bonds link cysteine 257-cysteine 278 and cysteine 290-cysteine 299.

The protein belongs to the ADP-ribosyl cyclase family. As to quaternary structure, homodimer. Spleen, liver, heart, thymus, thyroid gland, ileum, colon, cerebellum, salivary gland, adrenal gland, jejunum, islets of Langerhans and osteoclasts.

It is found in the cell membrane. It catalyses the reaction NAD(+) = cyclic ADP-beta-D-ribose + nicotinamide + H(+). It carries out the reaction nicotinate + NADP(+) = nicotinate-adenine dinucleotide phosphate + nicotinamide. The enzyme catalyses NAD(+) + H2O = ADP-D-ribose + nicotinamide + H(+). Its activity is regulated as follows. Both NAADP and cADPR synthesis are inhibited by nicotinic acid. Synthesizes the second messengers cyclic ADP-ribose and nicotinate-adenine dinucleotide phosphate, the former a second messenger for glucose-induced insulin secretion, the latter a Ca(2+) mobilizer. Also has cADPR hydrolase activity. Its function is as follows. Regulates osteoclastic bone resorption, probably via production of cyclic ADP-ribose and triggering of a cytosolic calcium ion signal through ryanodine receptor activation. In Rattus norvegicus (Rat), this protein is ADP-ribosyl cyclase/cyclic ADP-ribose hydrolase 1 (Cd38).